The sequence spans 638 residues: Threonine--tRNA ligase (638 aa).

The TGS domain maps to 1-61 (MPDIKLPDGS…EQNADLAIIT (61 aa)). The segment at 242 to 533 (DHRRLGKQYD…LIENFAGALP (292 aa)) is catalytic. Residues C333, H384, and H510 each contribute to the Zn(2+) site.

The protein belongs to the class-II aminoacyl-tRNA synthetase family. As to quaternary structure, homodimer. Zn(2+) is required as a cofactor.

Its subcellular location is the cytoplasm. The enzyme catalyses tRNA(Thr) + L-threonine + ATP = L-threonyl-tRNA(Thr) + AMP + diphosphate + H(+). In terms of biological role, catalyzes the attachment of threonine to tRNA(Thr) in a two-step reaction: L-threonine is first activated by ATP to form Thr-AMP and then transferred to the acceptor end of tRNA(Thr). Also edits incorrectly charged L-seryl-tRNA(Thr). The sequence is that of Threonine--tRNA ligase from Dechloromonas aromatica (strain RCB).